We begin with the raw amino-acid sequence, 225 residues long: Pyrimidine 5'-nucleotidase YjjG (225 aa).

D9 acts as the Nucleophile in catalysis.

This sequence belongs to the HAD-like hydrolase superfamily. YjjG family. Monomer, homodimer and possibly homotetramer in solution. The cofactor is Mn(2+). Requires Mg(2+) as cofactor. Co(2+) is required as a cofactor.

Its subcellular location is the cytoplasm. It carries out the reaction a ribonucleoside 5'-phosphate + H2O = a ribonucleoside + phosphate. The catalysed reaction is a 2'-deoxyribonucleoside 5'-phosphate + H2O = a 2'-deoxyribonucleoside + phosphate. The enzyme catalyses UMP + H2O = uridine + phosphate. It catalyses the reaction dUMP + H2O = 2'-deoxyuridine + phosphate. It carries out the reaction dTMP + H2O = thymidine + phosphate. Its activity is regulated as follows. In contrast to nucleotidases from other families, is not inhibited by ribo- and deoxyribonucleoside di- and triphosphates. Its function is as follows. Nucleotidase that shows high phosphatase activity toward non-canonical pyrimidine nucleotides and three canonical nucleoside 5'-monophosphates (UMP, dUMP, and dTMP), and very low activity against TDP, IMP, UDP, GMP, dGMP, AMP, dAMP, and 6-phosphogluconate. Appears to function as a house-cleaning nucleotidase in vivo, since the general nucleotidase activity of YjjG allows it to protect cells against non-canonical pyrimidine derivatives such as 5-fluoro-2'-deoxyuridine, 5-fluorouridine, 5-fluoroorotate, 5-fluorouracil, and 5-aza-2'-deoxycytidine, and prevents the incorporation of potentially mutagenic nucleotides into DNA. Its dUMP phosphatase activity that catalyzes the hydrolysis of dUMP to deoxyuridine is necessary for thymine utilization via the thymine salvage pathway. Is strictly specific to substrates with 5'-phosphates and shows no activity against nucleoside 2'- or 3'-monophosphates. In Escherichia coli (strain K12), this protein is Pyrimidine 5'-nucleotidase YjjG (yjjG).